The chain runs to 142 residues: Large ribosomal subunit protein cL37 alpha (142 aa).

Residues 1 to 62 constitute a chloroplast transit peptide; that stretch reads MALLSPLLSL…AQKRGTVVAM (62 aa). The interval 123–142 is disordered; sequence RKLRKRGAWPPSKMKKLKNV.

It belongs to the chloroplast-specific ribosomal protein cL37 family. As to quaternary structure, component of the chloroplast large ribosomal subunit (LSU). Mature 70S chloroplast ribosomes of higher plants consist of a small (30S) and a large (50S) subunit. The 30S small subunit contains 1 molecule of ribosomal RNA (16S rRNA) and 24 different proteins. The 50S large subunit contains 3 rRNA molecules (23S, 5S and 4.5S rRNA) and 33 different proteins.

It localises to the plastid. Its subcellular location is the chloroplast. Its function is as follows. Component of the chloroplast ribosome (chloro-ribosome), a dedicated translation machinery responsible for the synthesis of chloroplast genome-encoded proteins, including proteins of the transcription and translation machinery and components of the photosynthetic apparatus. The sequence is that of Large ribosomal subunit protein cL37 alpha (PSRP5) from Spinacia oleracea (Spinach).